A 291-amino-acid chain; its full sequence is Ribosomal RNA small subunit methyltransferase H (291 aa).

S-adenosyl-L-methionine-binding positions include 25–27 (GGH), Asp-45, Phe-73, Asp-88, and Gln-95.

Belongs to the methyltransferase superfamily. RsmH family.

It is found in the cytoplasm. The enzyme catalyses cytidine(1402) in 16S rRNA + S-adenosyl-L-methionine = N(4)-methylcytidine(1402) in 16S rRNA + S-adenosyl-L-homocysteine + H(+). In terms of biological role, specifically methylates the N4 position of cytidine in position 1402 (C1402) of 16S rRNA. This is Ribosomal RNA small subunit methyltransferase H from Flavobacterium psychrophilum (strain ATCC 49511 / DSM 21280 / CIP 103535 / JIP02/86).